Here is a 341-residue protein sequence, read N- to C-terminus: Paired box protein Pax-9 (341 aa).

Positions 4–130 (AFGEVNQLGG…SSISRILRNK (127 aa)) form a DNA-binding region, paired. A PAI subdomain region spans residues 7–63 (EVNQLGGVFVNGRPLPNAIRLRIVELAQLGIRPCDISRQLRVSHGCVSKILARYNET). The RED subdomain stretch occupies residues 82-130 (TVVKHIRTYKQRDPGIFAWEIRDRLLADGVCDKYNVPSVSSISRILRNK). An interaction with KDM5B region spans residues 168–189 (AAAAKVPTPPGVPAIPGSVAMP).

Interacts with KDM5B.

It is found in the nucleus. Its function is as follows. Transcription factor required for normal development of thymus, parathyroid glands, ultimobranchial bodies, teeth, skeletal elements of skull and larynx as well as distal limbs. This chain is Paired box protein Pax-9 (PAX9), found in Pan troglodytes (Chimpanzee).